Here is a 676-residue protein sequence, read N- to C-terminus: Pre-mRNA-splicing factor clf1 (676 aa).

HAT repeat units follow at residues 52–84, 86–118, 120–152, 154–185, 187–218, 220–255, 257–291, 301–333, 335–369, 379–415, 417–448, 450–482, 484–518, and 520–551; these read EYQG…WELE, KEFR…SEMR, RNIN…MEET, GNIQ…LEKR, NEFE…FEEE, GTSD…FEAK, KEYE…FEKQ, VILS…LEET, GDPD…LWIF, KDVD…FDIR, MDLQ…LERQ, FEFV…LERG, DDSE…FEEY, and GEYD…FEIN. Positions 554–566 are enriched in acidic residues; the sequence is EEEEEEEEEEEEE. A disordered region spans residues 554-573; it reads EEEEEEEEEEEEERPVSDEA. One copy of the HAT 15 repeat lies at 572–610; sequence EAKRRARAVFERAHKVFKEKEMKEERVELLNAWRAFEHT.

This sequence belongs to the crooked-neck family. As to quaternary structure, associated with the spliceosome.

Its subcellular location is the nucleus. Involved in pre-mRNA splicing and cell cycle progression. Required for the spliceosome assembly and initiation of the DNA replication. In Aspergillus fumigatus (strain ATCC MYA-4609 / CBS 101355 / FGSC A1100 / Af293) (Neosartorya fumigata), this protein is Pre-mRNA-splicing factor clf1 (clf1).